The primary structure comprises 207 residues: Small ribosomal subunit protein uS4 (207 aa).

The tract at residues Lys-33–Asn-54 is disordered. Positions Gly-42–Gly-53 are enriched in polar residues. An S4 RNA-binding domain is found at Ser-97–Ala-157.

The protein belongs to the universal ribosomal protein uS4 family. Part of the 30S ribosomal subunit. Contacts protein S5. The interaction surface between S4 and S5 is involved in control of translational fidelity.

Its function is as follows. One of the primary rRNA binding proteins, it binds directly to 16S rRNA where it nucleates assembly of the body of the 30S subunit. With S5 and S12 plays an important role in translational accuracy. The sequence is that of Small ribosomal subunit protein uS4 from Ralstonia pickettii (strain 12J).